A 466-amino-acid chain; its full sequence is Adenosylhomocysteinase (466 aa).

Substrate is bound by residues Thr-57, Asp-132, and Glu-192. 193-195 (TTT) is an NAD(+) binding site. The substrate site is built by Lys-222 and Asp-226. NAD(+) is bound by residues Asn-227, 256–261 (GYGDVG), Glu-279, Asn-314, 335–337 (IGH), and Asn-380.

It belongs to the adenosylhomocysteinase family. Requires NAD(+) as cofactor.

It localises to the cytoplasm. It catalyses the reaction S-adenosyl-L-homocysteine + H2O = L-homocysteine + adenosine. It functions in the pathway amino-acid biosynthesis; L-homocysteine biosynthesis; L-homocysteine from S-adenosyl-L-homocysteine: step 1/1. Its function is as follows. May play a key role in the regulation of the intracellular concentration of adenosylhomocysteine. This is Adenosylhomocysteinase from Mesorhizobium japonicum (strain LMG 29417 / CECT 9101 / MAFF 303099) (Mesorhizobium loti (strain MAFF 303099)).